Here is a 183-residue protein sequence, read N- to C-terminus: TATA-box-binding protein (183 aa).

2 consecutive repeat copies span residues 7 to 83 and 99 to 177.

It belongs to the TBP family.

In terms of biological role, general factor that plays a role in the activation of archaeal genes transcribed by RNA polymerase. Binds specifically to the TATA box promoter element which lies close to the position of transcription initiation. This is TATA-box-binding protein from Methanothrix thermoacetophila (strain DSM 6194 / JCM 14653 / NBRC 101360 / PT) (Methanosaeta thermophila).